The sequence spans 110 residues: UPF0122 protein gbs1018 (110 aa).

This sequence belongs to the UPF0122 family.

In terms of biological role, might take part in the signal recognition particle (SRP) pathway. This is inferred from the conservation of its genetic proximity to ftsY/ffh. May be a regulatory protein. This Streptococcus agalactiae serotype III (strain NEM316) protein is UPF0122 protein gbs1018.